A 217-amino-acid polypeptide reads, in one-letter code: Probable transaldolase (217 aa).

Lys-83 serves as the catalytic Schiff-base intermediate with substrate.

This sequence belongs to the transaldolase family. Type 3B subfamily.

It localises to the cytoplasm. It catalyses the reaction D-sedoheptulose 7-phosphate + D-glyceraldehyde 3-phosphate = D-erythrose 4-phosphate + beta-D-fructose 6-phosphate. It participates in carbohydrate degradation; pentose phosphate pathway; D-glyceraldehyde 3-phosphate and beta-D-fructose 6-phosphate from D-ribose 5-phosphate and D-xylulose 5-phosphate (non-oxidative stage): step 2/3. Its function is as follows. Transaldolase is important for the balance of metabolites in the pentose-phosphate pathway. In Ruegeria pomeroyi (strain ATCC 700808 / DSM 15171 / DSS-3) (Silicibacter pomeroyi), this protein is Probable transaldolase.